The chain runs to 509 residues: DNA nucleotidylexotransferase (509 aa).

Positions 1–24 (MDPPRASHLSPRKKRPRQTGALMA) are disordered. Positions 11-17 (PRKKRPR) match the Nuclear localization signal motif. The 98-residue stretch at 27 to 124 (PQDIKFQDLV…KPVEMTGKHQ (98 aa)) folds into the BRCT domain. Serine 134 bears the Phosphoserine mark. The interval 151-509 (SQYACQRRTT…DYIEPWERNA (359 aa)) is mediates interaction with DNTTIP2. The involved in DNA binding stretch occupies residues 258 to 262 (VGLKT). Residues 333–338 (GFRRGK) and 342–345 (HDVD) each bind a 2'-deoxyribonucleoside 5'-triphosphate. Positions 343, 345, and 433 each coordinate Mg(2+). 448–449 (GW) contacts a 2'-deoxyribonucleoside 5'-triphosphate.

It belongs to the DNA polymerase type-X family. As to quaternary structure, interacts with PRP19 and DNTTIP1. Forms a ternary complex with DNTTIP2 and core histone. Released from this complex by PCNA. Interacts with TRERF1. The cofactor is Mg(2+).

The protein localises to the nucleus. The enzyme catalyses DNA(n) + a 2'-deoxyribonucleoside 5'-triphosphate = DNA(n+1) + diphosphate. Template-independent DNA polymerase which catalyzes the random addition of deoxynucleoside 5'-triphosphate to the 3'-end of a DNA initiator. One of the in vivo functions of this enzyme is the addition of nucleotides at the junction (N region) of rearranged Ig heavy chain and T-cell receptor gene segments during the maturation of B- and T-cells. The sequence is that of DNA nucleotidylexotransferase (DNTT) from Homo sapiens (Human).